A 119-amino-acid chain; its full sequence is Ribonuclease P protein component (119 aa).

The interval 1 to 24 (MRGSSRFRPHEKLRASDDYQRVKR) is disordered. Over residues 8 to 21 (RPHEKLRASDDYQR) the composition is skewed to basic and acidic residues.

It belongs to the RnpA family. As to quaternary structure, consists of a catalytic RNA component (M1 or rnpB) and a protein subunit.

The enzyme catalyses Endonucleolytic cleavage of RNA, removing 5'-extranucleotides from tRNA precursor.. In terms of biological role, RNaseP catalyzes the removal of the 5'-leader sequence from pre-tRNA to produce the mature 5'-terminus. It can also cleave other RNA substrates such as 4.5S RNA. The protein component plays an auxiliary but essential role in vivo by binding to the 5'-leader sequence and broadening the substrate specificity of the ribozyme. This is Ribonuclease P protein component from Syntrophobacter fumaroxidans (strain DSM 10017 / MPOB).